A 691-amino-acid chain; its full sequence is Threonine--tRNA ligase (691 aa).

The segment at 1-22 (MSVPAQPAPGADGGDPRQPIRV) is disordered. Residues 1–73 (MSVPAQPAPG…DADAEVTPIA (73 aa)) form the TGS domain. Residues 268–574 (DHRKLGVELD…LTEHYAGAFP (307 aa)) are catalytic. Residues Cys-373, His-424, and His-551 each contribute to the Zn(2+) site.

Belongs to the class-II aminoacyl-tRNA synthetase family. As to quaternary structure, homodimer. Zn(2+) serves as cofactor.

The protein localises to the cytoplasm. The catalysed reaction is tRNA(Thr) + L-threonine + ATP = L-threonyl-tRNA(Thr) + AMP + diphosphate + H(+). In terms of biological role, catalyzes the attachment of threonine to tRNA(Thr) in a two-step reaction: L-threonine is first activated by ATP to form Thr-AMP and then transferred to the acceptor end of tRNA(Thr). Also edits incorrectly charged L-seryl-tRNA(Thr). This is Threonine--tRNA ligase from Mycobacterium ulcerans (strain Agy99).